A 1322-amino-acid polypeptide reads, in one-letter code: Protein fantom (1322 aa).

Residues 1-22 form the signal peptide; that stretch reads MVSARYPIEKWSRPQLEDHFHN. The stretch at 15–89 forms a coiled coil; that stretch reads QLEDHFHNVV…MKLKAAKQQL (75 aa). Residues 108–119 show a composition bias toward polar residues; sequence RSTFRQPPSTFR. Disordered stretches follow at residues 108-151, 189-275, and 392-418; these read RSTF…GEKL, KSSV…PDQT, and RIEE…SQSE. Residues 195–217 are compositionally biased toward low complexity; that stretch reads SSPPTRLSTSSSSKSSSSNNNND. Residues 224–234 show a composition bias toward acidic residues; it reads ELEEMSEMSDD. The stretch at 274–362 forms a coiled coil; sequence QTEKVLLDKL…EDQKKFEAMR (89 aa). The stretch at 456–538 forms a coiled coil; sequence ASENSLARWQ…FMLEEQIRTI (83 aa). 2 disordered regions span residues 891–1094 and 1121–1149; these read AELH…KPRN and TDPL…PVPL. Low complexity predominate over residues 918–927; it reads TDSSDTSFSH. The segment covering 956–975 has biased composition (acidic residues); that stretch reads SDGEEEADRIVFDDDDDEIE. Residues 984–996 are compositionally biased toward basic and acidic residues; sequence RDPEPLEVPERQV. The span at 1015–1029 shows a compositional bias: polar residues; the sequence is NGTNESKESTPVTQR. The segment covering 1042 to 1067 has biased composition (acidic residues); sequence PELEPESGPEPEPVVESEPNEVAETE. A compositionally biased stretch (basic and acidic residues) spans 1068 to 1080; that stretch reads EDRKRELKTEELK. Over residues 1127 to 1139 the composition is skewed to low complexity; the sequence is SVPPSESSSTSSP.

This sequence belongs to the RPGRIP1 family. In terms of tissue distribution, expressed at the transition zone at the base of cilia. Expressed in ciliated sensory neurons, including the amphid neurons in the head.

It localises to the cell projection. It is found in the cilium. Its function is as follows. Thought to have an important role in cilia formation and cilia-mediated chemosensation. Involved in the docking of other MKS/MKSR proteins localized to the transition zone of the cilia. This chain is Protein fantom (mks-5), found in Caenorhabditis elegans.